The primary structure comprises 490 residues: POC1 centriolar protein homolog B (490 aa).

WD repeat units lie at residues 16–55 (GHKD…RAFR), 58–97 (GHTD…ESTV), 100–139 (AHTA…FLYS), 142–181 (RHTN…CINI), 184–223 (DYGG…LIQH), 226–265 (VHNA…LIYT), and 268–307 (GHKG…LNYR). Residues 375–388 (DGASSSRAQFTSGM) are compositionally biased toward polar residues. Residues 375 to 427 (DGASSSRAQFTSGMDSGPFRTHTQAREEEDENQEERFAGGMTASPAERSGIPS) are disordered. Residues 431-463 (STLENIVQQLDILTQTVAVLEERLTLTEDKLRT) are a coiled coil.

It belongs to the WD repeat POC1 family.

The protein localises to the cytoplasm. It is found in the cytoskeleton. Its subcellular location is the microtubule organizing center. The protein resides in the centrosome. It localises to the centriole. Its function is as follows. Plays an important role in centriole assembly and/or stability and ciliogenesis. Involved in early steps of centriole duplication, as well as in the later steps of centriole length control. The polypeptide is POC1 centriolar protein homolog B (Danio rerio (Zebrafish)).